The sequence spans 240 residues: Methylthioribulose-1-phosphate dehydratase (240 aa).

A compositionally biased stretch (basic and acidic residues) spans methionine 1–asparagine 10. The interval methionine 1–glutamate 20 is disordered. Cysteine 100 provides a ligand contact to substrate. 2 residues coordinate Zn(2+): histidine 117 and histidine 119. Glutamate 146 serves as the catalytic Proton donor/acceptor. Histidine 202 contributes to the Zn(2+) binding site.

It belongs to the aldolase class II family. MtnB subfamily. The cofactor is Zn(2+).

It localises to the cytoplasm. The enzyme catalyses 5-(methylsulfanyl)-D-ribulose 1-phosphate = 5-methylsulfanyl-2,3-dioxopentyl phosphate + H2O. The protein operates within amino-acid biosynthesis; L-methionine biosynthesis via salvage pathway; L-methionine from S-methyl-5-thio-alpha-D-ribose 1-phosphate: step 2/6. Its function is as follows. Catalyzes the dehydration of methylthioribulose-1-phosphate (MTRu-1-P) into 2,3-diketo-5-methylthiopentyl-1-phosphate (DK-MTP-1-P). This chain is Methylthioribulose-1-phosphate dehydratase, found in Aspergillus fumigatus (strain CBS 144.89 / FGSC A1163 / CEA10) (Neosartorya fumigata).